The following is a 79-amino-acid chain: DNA gyrase inhibitor YacG (79 aa).

Zn(2+)-binding residues include C7, C10, C26, and C30.

It belongs to the DNA gyrase inhibitor YacG family. In terms of assembly, interacts with GyrB. Zn(2+) is required as a cofactor.

Its function is as follows. Inhibits all the catalytic activities of DNA gyrase by preventing its interaction with DNA. Acts by binding directly to the C-terminal domain of GyrB, which probably disrupts DNA binding by the gyrase. The polypeptide is DNA gyrase inhibitor YacG (Shewanella halifaxensis (strain HAW-EB4)).